The following is a 142-amino-acid chain: Hemoglobin subunit alpha-B (142 aa).

Positions 2–142 (PFSASDRHDI…VSETLYSKYR (141 aa)) constitute a Globin domain. Gln59 contacts O2. His88 is a heme b binding site.

It belongs to the globin family. In terms of assembly, heterotetramer of either two alpha-B chains or two alpha-C chains and two beta chains. The two major hemoglobins, B and C, associate upon deoxygenation to form a trimer of tetramers, BC2, that has a much lower affinity for oxygen than either component alone. As to expression, red blood cells.

The alpha-B chain is a component of adult hemoglobin B. The polypeptide is Hemoglobin subunit alpha-B (Aquarana catesbeiana (American bullfrog)).